A 320-amino-acid chain; its full sequence is 4-hydroxythreonine-4-phosphate dehydrogenase (320 aa).

T132 lines the substrate pocket. 3 residues coordinate a divalent metal cation: H161, H205, and H258. Substrate contacts are provided by K266, N275, and R284.

Belongs to the PdxA family. In terms of assembly, homodimer. A divalent metal cation is required as a cofactor.

Its subcellular location is the cytoplasm. It carries out the reaction 4-(phosphooxy)-L-threonine + NAD(+) = 3-amino-2-oxopropyl phosphate + CO2 + NADH. The protein operates within cofactor biosynthesis; pyridoxine 5'-phosphate biosynthesis; pyridoxine 5'-phosphate from D-erythrose 4-phosphate: step 4/5. Catalyzes the NAD(P)-dependent oxidation of 4-(phosphooxy)-L-threonine (HTP) into 2-amino-3-oxo-4-(phosphooxy)butyric acid which spontaneously decarboxylates to form 3-amino-2-oxopropyl phosphate (AHAP). The sequence is that of 4-hydroxythreonine-4-phosphate dehydrogenase from Aquifex aeolicus (strain VF5).